Reading from the N-terminus, the 350-residue chain is Ribosomal RNA small subunit methyltransferase C (350 aa).

The protein belongs to the methyltransferase superfamily. RsmC family. As to quaternary structure, monomer.

Its subcellular location is the cytoplasm. It catalyses the reaction guanosine(1207) in 16S rRNA + S-adenosyl-L-methionine = N(2)-methylguanosine(1207) in 16S rRNA + S-adenosyl-L-homocysteine + H(+). Its function is as follows. Specifically methylates the guanine in position 1207 of 16S rRNA in the 30S particle. In Sodalis glossinidius (strain morsitans), this protein is Ribosomal RNA small subunit methyltransferase C.